The sequence spans 134 residues: Zinc finger protein 593 (134 aa).

Residues 1–25 (MGRSRRTGAHRAHSLARQMKAKRRR) are compositionally biased toward basic residues. Disordered stretches follow at residues 1–57 (MGRS…DLPG) and 82–134 (SKDH…DTST). A compositionally biased stretch (basic and acidic residues) spans 26–36 (PDLDEIHRELR). The segment at 61-85 (HRCLACARYFIDSTNLKTHFRSKDH) adopts a C2H2-type zinc-finger fold.

The protein belongs to the ZNF593/BUD20 C2H2-type zinc-finger protein family. As to quaternary structure, associates with pre-60S ribosomal particles. Ubiquitous. Detected in spleen, prostate, testis, small intestine, colon and to a minor level in thymus and peripheral blood leukocytes.

It localises to the nucleus. The protein resides in the nucleolus. Its subcellular location is the cytoplasm. In terms of biological role, involved in pre-60S ribosomal particles maturation by promoting the nuclear export of the 60S ribosome. Negatively modulates the DNA binding activity of Oct-2 and therefore its transcriptional regulatory activity. This Homo sapiens (Human) protein is Zinc finger protein 593 (ZNF593).